Reading from the N-terminus, the 761-residue chain is Mitochondrial intermediate peptidase (761 aa).

The N-terminal 37 residues, 1–37, are a transit peptide targeting the mitochondrion; that stretch reads MLIQKILLNKEISRLPRILSILNYTGLRWLSGSSGRN. A Zn(2+)-binding site is contributed by His547. Residue Glu548 is part of the active site. His551 and His554 together coordinate Zn(2+).

It belongs to the peptidase M3 family. Zn(2+) is required as a cofactor.

The protein resides in the mitochondrion matrix. It carries out the reaction Release of an N-terminal octapeptide as second stage of processing of some proteins imported into the mitochondrion.. Cleaves proteins, imported into the mitochondrion, to their mature size. While most mitochondrial precursor proteins are processed to the mature form in one step by mitochondrial processing peptidase (MPP), the sequential cleavage by MIP of an octapeptide after initial processing by MPP is a required step for a subgroup of nuclear-encoded precursor proteins destined for the matrix or the inner membrane. This chain is Mitochondrial intermediate peptidase (OCT1), found in Candida glabrata (strain ATCC 2001 / BCRC 20586 / JCM 3761 / NBRC 0622 / NRRL Y-65 / CBS 138) (Yeast).